A 269-amino-acid chain; its full sequence is Regulatory protein RecX (269 aa).

The protein belongs to the RecX family.

The protein localises to the cytoplasm. Its function is as follows. Modulates RecA activity. The chain is Regulatory protein RecX from Lactococcus lactis subsp. cremoris (strain SK11).